Reading from the N-terminus, the 119-residue chain is uncharacterized protein (119 aa).

Helical transmembrane passes span 28–48 (AWTT…HLVF), 55–75 (IEVV…NLAI), and 80–100 (PIGK…GIIV).

To M.tuberculosis Rv1342c.

Its subcellular location is the cell membrane. This is an uncharacterized protein from Mycobacterium leprae (strain TN).